Reading from the N-terminus, the 826-residue chain is 1,4-alpha-glucan-branching enzyme 1, chloroplastic/amyloplastic (826 aa).

The transit peptide at 1 to 58 (ATTTTTTHNSKNKQYLAKQKPVELTLGYQNPNGCKVCSFGSKGSIYQKVSSGFKGVSV) directs the protein to the chloroplast. Aspartate 409 (nucleophile) is an active-site residue. Glutamate 464 serves as the catalytic Proton donor. The segment at 782 to 813 (DTDVARIPDVSMESEDSNLDRIEDNSEDAVDA) is disordered.

This sequence belongs to the glycosyl hydrolase 13 family. GlgB subfamily. As to quaternary structure, monomer. As to expression, expressed in roots, leaves, stipules, pods and flowers.

Its subcellular location is the plastid. It localises to the chloroplast. The protein resides in the amyloplast. It catalyses the reaction Transfers a segment of a (1-&gt;4)-alpha-D-glucan chain to a primary hydroxy group in a similar glucan chain.. The protein operates within glycan biosynthesis; starch biosynthesis. Its function is as follows. Catalyzes the formation of the alpha-1,6-glucosidic linkages in starch by scission of a 1,4-alpha-linked oligosaccharide from growing alpha-1,4-glucan chains and the subsequent attachment of the oligosaccharide to the alpha-1,6 position. May preferentially transfer long chains during branching. This Pisum sativum (Garden pea) protein is 1,4-alpha-glucan-branching enzyme 1, chloroplastic/amyloplastic (SBEII).